Here is a 640-residue protein sequence, read N- to C-terminus: RNA polymerase II elongation factor ELL2 (640 aa).

3 disordered regions span residues 172-202 (AVSD…STIS), 290-320 (KLNP…PQKR), and 343-490 (RVPP…EEDL). Composition is skewed to polar residues over residues 184–202 (TPMN…STIS) and 291–318 (LNPS…SSPQ). Over residues 360–372 (AAGLPLPPAAAAI) the composition is skewed to low complexity. Positions 391–401 (IVNSNSNSPST) are enriched in polar residues. A compositionally biased stretch (basic residues) spans 457–470 (MSHKKSKKKSKKHK). A compositionally biased stretch (basic and acidic residues) spans 471–490 (EKDQIKKHDIETIEEKEEDL). 2 positions are modified to phosphoserine: S503 and S580. One can recognise an OCEL domain in the interval 526–636 (PDYLIKYIAI…LIGEFDQQQA (111 aa)).

It belongs to the ELL/occludin family. In terms of assembly, component of the super elongation complex (SEC), at least composed of EAF1, EAF2, CDK9, MLLT3/AF9, AFF (AFF1 or AFF4), the P-TEFb complex and ELL (ELL, ELL2 or ELL3). Component of the little elongation complex (LEC), at least composed of ELL (ELL, ELL2 or ELL3), ZC3H8, ICE1 and ICE2. Interacts with AFF4; the interaction is direct and leads to stabilize ELL2 and prevent ELL2 ubiquitination. Interacts with EAF1 and EAF2. In terms of processing, ubiquitinated by SIAH1, leading to its degradation by the proteasome. Interaction with AFF4 stabilizes ELL2 and prevents ELL2 ubiquitination.

The protein localises to the nucleus. Its function is as follows. Elongation factor component of the super elongation complex (SEC), a complex required to increase the catalytic rate of RNA polymerase II transcription by suppressing transient pausing by the polymerase at multiple sites along the DNA. Component of the little elongation complex (LEC), a complex required to regulate small nuclear RNA (snRNA) gene transcription by RNA polymerase II and III. Plays a role in immunoglobulin secretion in plasma cells: directs efficient alternative mRNA processing, influencing both proximal poly(A) site choice and exon skipping, as well as immunoglobulin heavy chain (IgH) alternative processing. Probably acts by regulating histone modifications accompanying transition from membrane-specific to secretory IgH mRNA expression. The chain is RNA polymerase II elongation factor ELL2 (ELL2) from Homo sapiens (Human).